Reading from the N-terminus, the 244-residue chain is Ribonuclease 3 (244 aa).

One can recognise an RNase III domain in the interval 21–148 (DHAPLLEAWG…MLGAIYLHHG (128 aa)). Residue glutamate 61 participates in Mg(2+) binding. Aspartate 65 is a catalytic residue. Residues aspartate 134 and glutamate 137 each coordinate Mg(2+). Glutamate 137 is a catalytic residue. Residues 175 to 242 (DWKTVLLEKL…AKQAVQKLNE (68 aa)) form the DRBM domain.

This sequence belongs to the ribonuclease III family. Homodimer. It depends on Mg(2+) as a cofactor.

Its subcellular location is the cytoplasm. The catalysed reaction is Endonucleolytic cleavage to 5'-phosphomonoester.. Digests double-stranded RNA. Involved in the processing of primary rRNA transcript to yield the immediate precursors to the large and small rRNAs (23S and 16S). Processes some mRNAs, and tRNAs when they are encoded in the rRNA operon. Processes pre-crRNA and tracrRNA of type II CRISPR loci if present in the organism. This is Ribonuclease 3 from Corynebacterium jeikeium (strain K411).